We begin with the raw amino-acid sequence, 342 residues long: Fatty acid desaturase 6 (342 aa).

Transmembrane regions (helical) follow at residues G39–L59 and S63–V83. Residues H87–H91 carry the Histidine box-1 motif. The Histidine box-2 signature appears at H124–H128. 2 consecutive transmembrane segments (helical) span residues Y151–E171 and L185–F205. A Histidine box-3 motif is present at residues H277–H281.

It belongs to the fatty acid desaturase type 1 family.

The protein resides in the membrane. The protein operates within lipid metabolism; fatty acid metabolism. This chain is Fatty acid desaturase 6 (FADS6), found in Bos taurus (Bovine).